Reading from the N-terminus, the 185-residue chain is Elongation factor P 1 (185 aa).

The protein belongs to the elongation factor P family.

It is found in the cytoplasm. The protein operates within protein biosynthesis; polypeptide chain elongation. Its function is as follows. Involved in peptide bond synthesis. Stimulates efficient translation and peptide-bond synthesis on native or reconstituted 70S ribosomes in vitro. Probably functions indirectly by altering the affinity of the ribosome for aminoacyl-tRNA, thus increasing their reactivity as acceptors for peptidyl transferase. In Chlamydia pneumoniae (Chlamydophila pneumoniae), this protein is Elongation factor P 1 (efp1).